The sequence spans 164 residues: Cyanate hydratase (164 aa).

Catalysis depends on residues Arg90, Glu93, and Ser116.

The protein belongs to the cyanase family.

The enzyme catalyses cyanate + hydrogencarbonate + 3 H(+) = NH4(+) + 2 CO2. Catalyzes the reaction of cyanate with bicarbonate to produce ammonia and carbon dioxide. The polypeptide is Cyanate hydratase (Vitis vinifera (Grape)).